We begin with the raw amino-acid sequence, 501 residues long: Sucrose transport protein SUT2 (501 aa).

Over 1 to 31 (MPRRPSGGGGGAGPAAAAVRKVPLRKLLRAA) the chain is Cytoplasmic. Residues 32 to 52 (SVACGVQFGWALQLSLLTPYV) traverse the membrane as a helical segment. The Extracellular portion of the chain corresponds to 53–55 (QEL). A helical membrane pass occupies residues 56–76 (GIPHAFASLVWLCGPLSGLLV). Residues 77–98 (QPLVGHLSDRIAPAASPLGRRR) lie on the Cytoplasmic side of the membrane. The chain crosses the membrane as a helical span at residues 99–119 (PFIAAGAASIAAAVLTVGFSA). Topologically, residues 120 to 135 (DLGRIFGDSITPGSTR) are extracellular. Residues 136-156 (LGAIIVYLVGFWLLDVGNNAT) traverse the membrane as a helical segment. The Cytoplasmic portion of the chain corresponds to 157-176 (QGPCRAFLADLTENDPRRTR). Residues 177–197 (IANAYFSLFMALGNILGYATG) traverse the membrane as a helical segment. The Extracellular segment spans residues 198-222 (AYSGWYKIFPFTVTPSCSISCANLK). Residues 223-243 (SAFLLDIIILVVTTCITVASV) traverse the membrane as a helical segment. The Cytoplasmic segment spans residues 244–278 (QEPQSLGSDEADHPSTEQEAFLWELFGSFRYFTLP). The chain crosses the membrane as a helical span at residues 279-299 (VWMVLIVTALTWIGWFPFILF). Over 300–327 (DTDWMGREIYRGSPDDPSITQSYHDGVR) the chain is Extracellular. Residues 328–348 (MGSFGLMLNSVLLGFTSIVLE) form a helical membrane-spanning segment. The Cytoplasmic portion of the chain corresponds to 349-356 (KLCRKWGA). A helical membrane pass occupies residues 357–377 (GLVWGVSNILMALCFVAMLVI). Topologically, residues 378–394 (TYVAKNMDYPPSGVPPT) are extracellular. Residues 395 to 415 (GIVIASLVVFTILGAPLAITY) traverse the membrane as a helical segment. Residues 416 to 433 (SIPYAMAASRVENLGLGQ) lie on the Cytoplasmic side of the membrane. A helical transmembrane segment spans residues 434–454 (GLAMGILNLAIVIPQVIVSLG). The Extracellular segment spans residues 455 to 467 (SGPWDQLFGGGNA). A helical transmembrane segment spans residues 468-488 (PAFAVAAAASFIGGLVAILGL). Residues 489–501 (PRARIASRRRGHR) are Cytoplasmic-facing.

This sequence belongs to the glycoside-pentoside-hexuronide (GPH) cation symporter transporter (TC 2.A.2.4) family. In terms of assembly, homodimer. In terms of tissue distribution, expressed in source leaf blades.

The protein localises to the cell membrane. It participates in glycan biosynthesis; sucrose metabolism. Responsible for the transport of sucrose into the cell, with the concomitant uptake of protons (symport system). May also transport other glucosides. This Oryza sativa subsp. indica (Rice) protein is Sucrose transport protein SUT2 (SUT2).